Reading from the N-terminus, the 355-residue chain is Protein ATP1B4 (355 aa).

Topologically, residues Met-1–Ser-108 are nuclear. The tract at residues Glu-35–Thr-76 is disordered. Residues Asp-49–Glu-68 are compositionally biased toward acidic residues. A helical; Signal-anchor for type II membrane protein transmembrane segment spans residues Leu-109–Met-129. The Perinuclear space portion of the chain corresponds to Tyr-130 to Thr-355.

The protein belongs to the X(+)/potassium ATPases subunit beta family. Associates with a SMAD7-transcriptional complex. Interacts with SNW1 and TOR1AIP1. Does not associate with known Na,K-ATPase alpha-subunits. As to expression, expressed in skeletal muscle (at protein level). Expressed during postnatal development in skeletal muscle and heart.

It localises to the nucleus inner membrane. Its function is as follows. May act as a transcriptional coregulator during muscle development through its interaction with SNW1. Has lost its ancestral function as a Na,K-ATPase beta-subunit. The polypeptide is Protein ATP1B4 (ATP1B4) (Sus scrofa (Pig)).